The primary structure comprises 408 residues: MKDIEGLLGLCVCFVGLPASGKTSSAMKLSRYLTWMSVSTHLYDTKEIDNSLSENSNSDSENLAKTLSPIFDNLESVFKKGTDVAILDFNQCTLKFRKSIVELAKARNMLLMFVEVVCTNQKIIDENITDMCQHSPYFKSFPFEESKNKILDSIHEYEKHYTPLSEAEECTFVRIVDFGAELIVHKLENYLESRIVYYLSNLRTRRRSIWLSRHGESQFNVEGKIGGDSSLSPQGLKYAALLPEYVAKFSIGEKGLTVWTSSMARTIQTARHLNCQKLEWRALDELDAGTCDGFTYDYIEQNFPHEAELRNNDKFHYRYRGGESYMDVVRRLEPIIMELERQGDVFIICHQAILRCIYGYYHNLSLEELPFINVPLHTIIKLTPMTYETIEERVTVPISAVSTQRGKH.

An ATP-binding site is contributed by 16-24 (GLPASGKTS). The active site involves Asp88. 127–132 (NITDMC) lines the ATP pocket. Position 157 (Tyr157) interacts with beta-D-fructose 6-phosphate. Arg213 contacts beta-D-fructose 2,6-bisphosphate. The active-site Tele-phosphohistidine intermediate is His214. Beta-D-fructose 2,6-bisphosphate contacts are provided by Asn220 and Gly226. Residue Glu285 is the Proton donor/acceptor of the active site. The beta-D-fructose 2,6-bisphosphate site is built by Tyr296, Arg310, Lys314, Tyr325, Gln351, and Arg355. 307-310 (AELR) is a binding site for ATP. ATP-binding positions include 351–355 (QAILR) and Tyr387.

It in the C-terminal section; belongs to the phosphoglycerate mutase family.

The catalysed reaction is beta-D-fructose 2,6-bisphosphate + H2O = beta-D-fructose 6-phosphate + phosphate. Functionally, this is predominantly if not solely a fructose-2,6-bisphosphatase. The protein is Probable fructose-2,6-bisphosphatase C732.02c of Schizosaccharomyces pombe (strain 972 / ATCC 24843) (Fission yeast).